The primary structure comprises 330 residues: Aspartate--ammonia ligase (330 aa).

Belongs to the class-II aminoacyl-tRNA synthetase family. AsnA subfamily.

The protein localises to the cytoplasm. It carries out the reaction L-aspartate + NH4(+) + ATP = L-asparagine + AMP + diphosphate + H(+). Its pathway is amino-acid biosynthesis; L-asparagine biosynthesis; L-asparagine from L-aspartate (ammonia route): step 1/1. This Streptococcus pneumoniae serotype 2 (strain D39 / NCTC 7466) protein is Aspartate--ammonia ligase.